The following is a 423-amino-acid chain: MKSWSTRPLPQLPGNIEAPQLFDSASKTLRALPVAADASLYVCGITPYDATHMGHAATYLAFDLLGRVWRDSGASVNYVQNVTDIDDPLLERADRDGVDWRELAESQIELFRADMTALNVIAPQQYIGAIEAIQWIVPAVEELIAEGFAYRMDSGDVYFDTVAASVKTPDSSNAGELGAWWLGQISGLSPEEMLPVFAERGGDPERDGKRNPLDPLLWRVERAGEPAWPGASLGDGRPGWHIECTVIARKFLPAPFSVQGGGSDLLFPHHEMGDGHAWALDHTPLAKHYAHAGMVGLDGEKMSKSRGNLVLVSALRAEGVDPMAVRLSILANHYRSDWSWTAELLERSKLRLAQWRAAMEHTSVGSAAQLVSEIRTALAADLDAPTALNAVDNWVGQKATTEHSALDAALASDAIEALLGVVL.

A Zn(2+)-binding site is contributed by C43. Residues 43-46 (CGIT), T58, and 81-83 (NVT) each bind L-cysteinyl-5'-AMP. Positions 45–55 (ITPYDATHMGH) match the 'HIGH' region motif. The short motif at 199–204 (ERGGDP) is the 'ERGGDP' region element. W240 is a binding site for L-cysteinyl-5'-AMP. C244 contributes to the Zn(2+) binding site. L-cysteinyl-5'-AMP is bound at residue 262–264 (GSD). H269 is a Zn(2+) binding site. V295 lines the L-cysteinyl-5'-AMP pocket. The short motif at 301-305 (KMSKS) is the 'KMSKS' region element.

This sequence belongs to the class-I aminoacyl-tRNA synthetase family. MshC subfamily. In terms of assembly, monomer. It depends on Zn(2+) as a cofactor.

The enzyme catalyses 1D-myo-inositol 2-amino-2-deoxy-alpha-D-glucopyranoside + L-cysteine + ATP = 1D-myo-inositol 2-(L-cysteinylamino)-2-deoxy-alpha-D-glucopyranoside + AMP + diphosphate + H(+). Catalyzes the ATP-dependent condensation of GlcN-Ins and L-cysteine to form L-Cys-GlcN-Ins. This chain is L-cysteine:1D-myo-inositol 2-amino-2-deoxy-alpha-D-glucopyranoside ligase, found in Renibacterium salmoninarum (strain ATCC 33209 / DSM 20767 / JCM 11484 / NBRC 15589 / NCIMB 2235).